The primary structure comprises 350 residues: Biotin synthase (350 aa).

Residues 54–278 (REIQLSTLLS…TMPQSYVRLS (225 aa)) form the Radical SAM core domain. [4Fe-4S] cluster-binding residues include Cys-69, Cys-73, and Cys-76. The [2Fe-2S] cluster site is built by Cys-113, Cys-144, Cys-204, and Arg-276.

Belongs to the radical SAM superfamily. Biotin synthase family. As to quaternary structure, homodimer. Requires [4Fe-4S] cluster as cofactor. It depends on [2Fe-2S] cluster as a cofactor.

It carries out the reaction (4R,5S)-dethiobiotin + (sulfur carrier)-SH + 2 reduced [2Fe-2S]-[ferredoxin] + 2 S-adenosyl-L-methionine = (sulfur carrier)-H + biotin + 2 5'-deoxyadenosine + 2 L-methionine + 2 oxidized [2Fe-2S]-[ferredoxin]. The protein operates within cofactor biosynthesis; biotin biosynthesis; biotin from 7,8-diaminononanoate: step 2/2. Catalyzes the conversion of dethiobiotin (DTB) to biotin by the insertion of a sulfur atom into dethiobiotin via a radical-based mechanism. In Neisseria gonorrhoeae (strain ATCC 700825 / FA 1090), this protein is Biotin synthase.